A 128-amino-acid chain; its full sequence is Glycophorin-C (128 aa).

A compositionally biased stretch (polar residues) spans 1-12; that stretch reads MWSTRSPNSTAW. Residues 1-48 are disordered; that stretch reads MWSTRSPNSTAWPLSLEPDPGMASASTTMHTTTIAEPDPGMSGWPDGR. Residues 1–57 lie on the Extracellular side of the membrane; that stretch reads MWSTRSPNSTAWPLSLEPDPGMASASTTMHTTTIAEPDPGMSGWPDGRMETSTPTIM. S3 carries an O-linked (GalNAc...) serine glycan. O-linked (GalNAc...) threonine glycosylation is present at T4. The O-linked (GalNAc...) serine glycan is linked to S6. N-linked (GlcNAc...) asparagine glycosylation is present at N8. S9 is a glycosylation site (O-linked (GalNAc...) serine). T10 is a glycosylation site (O-linked (GalNAc...) threonine). O-linked (GalNAc...) serine glycans are attached at residues S15, S24, and S26. The span at 22-33 shows a compositional bias: low complexity; that stretch reads MASASTTMHTTT. O-linked (GalNAc...) threonine glycosylation is found at T27, T28, T31, T32, and T33. Residue S42 is glycosylated (O-linked (GalNAc...) serine). A helical; Signal-anchor for type III membrane protein membrane pass occupies residues 58–81; sequence DIVVIAGVIAAVAIVLVSLLFVML. Topologically, residues 82–128 are cytoplasmic; the sequence is RYMYRHKGTYHTNEAKGTEFAESADAALQGDPALQDAGDSSRKEYFI. 2 positions are modified to phosphoserine: S104 and S122. Positions 108-128 are disordered; sequence ALQGDPALQDAGDSSRKEYFI.

It belongs to the glycophorin-C family. O-glycosylated with core 1 or possibly core 8 glycans. In terms of tissue distribution, glycophorin-C is expressed in erythrocytes. Glycophorin-D and IsoGPC are ubiquitously expressed.

It localises to the cell membrane. This protein is a minor sialoglycoprotein in human erythrocyte membranes. The blood group Gerbich antigens and receptors for Plasmodium falciparum merozoites are most likely located within the extracellular domain. Glycophorin-C plays an important role in regulating the stability of red cells. The sequence is that of Glycophorin-C (GYPC) from Homo sapiens (Human).